The primary structure comprises 141 residues: Hemoglobin subunit alpha (141 aa).

Residues 1–141 form the Globin domain; sequence VLSPADKSNV…VSTVLTSKYR (141 aa). Serine 3 is subject to Phosphoserine. N6-succinyllysine is present on residues lysine 7 and lysine 11. Lysine 16 carries the N6-acetyllysine; alternate modification. Position 16 is an N6-succinyllysine; alternate (lysine 16). Tyrosine 24 carries the post-translational modification Phosphotyrosine. Serine 35 bears the Phosphoserine mark. Residue lysine 40 is modified to N6-succinyllysine. Serine 49 carries the post-translational modification Phosphoserine. Histidine 58 provides a ligand contact to O2. Histidine 87 serves as a coordination point for heme b. At serine 102 the chain carries Phosphoserine. Threonine 108 is subject to Phosphothreonine. Serine 124 and serine 131 each carry phosphoserine. Threonine 134 and threonine 137 each carry phosphothreonine. The residue at position 138 (serine 138) is a Phosphoserine.

It belongs to the globin family. As to quaternary structure, heterotetramer of two alpha chains and two beta chains. As to expression, red blood cells.

Functionally, involved in oxygen transport from the lung to the various peripheral tissues. Its function is as follows. Hemopressin acts as an antagonist peptide of the cannabinoid receptor CNR1. Hemopressin-binding efficiently blocks cannabinoid receptor CNR1 and subsequent signaling. This chain is Hemoglobin subunit alpha (HBA), found in Saguinus oedipus (Cotton-top tamarin).